Here is a 434-residue protein sequence, read N- to C-terminus: Beta-enolase (434 aa).

A2 carries the post-translational modification N-acetylalanine. A Phosphothreonine modification is found at T72. A phosphoserine mark is found at S83 and S157. Substrate is bound by residues H158 and E167. S176 bears the Phosphoserine mark. Phosphothreonine is present on T205. The active-site Proton donor is E210. T229 bears the Phosphothreonine mark. Y236 carries the phosphotyrosine modification. D245 is a binding site for Mg(2+). A Phosphoserine modification is found at S263. Residues E293 and D318 each coordinate substrate. 2 residues coordinate Mg(2+): E293 and D318. The active-site Proton acceptor is K343. Residues 370 to 373 and K394 contribute to the substrate site; that span reads SHRS.

It belongs to the enolase family. As to quaternary structure, mammalian enolase is composed of 3 isozyme subunits, alpha, beta and gamma, which can form homodimers or heterodimers which are cell-type and development-specific. Interacts with PNKD. Mg(2+) is required as a cofactor.

The protein localises to the cytoplasm. It carries out the reaction (2R)-2-phosphoglycerate = phosphoenolpyruvate + H2O. Its pathway is carbohydrate degradation; glycolysis; pyruvate from D-glyceraldehyde 3-phosphate: step 4/5. In terms of biological role, glycolytic enzyme that catalyzes the conversion of 2-phosphoglycerate to phosphoenolpyruvate. Appears to have a function in striated muscle development and regeneration. The chain is Beta-enolase (ENO3) from Sus scrofa (Pig).